We begin with the raw amino-acid sequence, 487 residues long: MKAQPKASHFINGEYVEDTDGTVIESLYPATGEVIARLHAATPAIVEKAIAAAKRAQPEWAAMSPMARGRILKRAADIMRERNRELSELETLDTGKPIQETIVADPTSGADAFEFFGGVAPAGLNGSHIPLGQDFAYTKRVPLGVCVGIGAWNYPQQIACWKGAPALISGNAMVFKPSENTPLGALKIAEILHEAGLPKGLFNVIQGDRDTGPLLVNHPDVAKVSLTGSVPTGRRVAAAAAGSLKHVTMELGGKSPLIVFDDADLDSAVGGAMLGNFYSTGQVCSNGTRVFVQKAVKAEFLKRLKARTEAMLIGDPLDEATQIGPMVSWAQREKVIAYIEKGKAEGATLVAGGGIPNNVSGEGYYVQPTVFADVTDDMTIAREEIFGPVMSVLDFDDEDEVITRANASEFGLSGGVFTADLSRAHRVVDRLEAGTLWINTYNLCPVEIPFGGSKQSGFGRENSLAALEHYSELKTVYVGMGPVAAPY.

Ser26 and Asp93 together coordinate K(+). 150-152 contributes to the NAD(+) binding site; it reads GAW. Catalysis depends on Lys162, which acts as the Charge relay system. Residues 176–179 and 229–232 each bind NAD(+); these read KPSE and SVPT. Leu244 lines the K(+) pocket. Catalysis depends on Glu250, which acts as the Proton acceptor. NAD(+) contacts are provided by Gly252, Cys284, and Glu384. Catalysis depends on Cys284, which acts as the Nucleophile. Position 284 is a cysteine sulfenic acid (-SOH) (Cys284). Residues Lys454 and Gly457 each coordinate K(+). Residue Glu461 is the Charge relay system of the active site.

It belongs to the aldehyde dehydrogenase family. In terms of assembly, dimer of dimers. K(+) is required as a cofactor.

It carries out the reaction betaine aldehyde + NAD(+) + H2O = glycine betaine + NADH + 2 H(+). Its pathway is amine and polyamine biosynthesis; betaine biosynthesis via choline pathway; betaine from betaine aldehyde: step 1/1. Functionally, involved in the biosynthesis of the osmoprotectant glycine betaine. Catalyzes the irreversible oxidation of betaine aldehyde to the corresponding acid. This chain is Betaine aldehyde dehydrogenase, found in Rhizobium etli (strain ATCC 51251 / DSM 11541 / JCM 21823 / NBRC 15573 / CFN 42).